The following is a 341-amino-acid chain: UDP-N-acetylglucosamine--N-acetylmuramyl-(pentapeptide) pyrophosphoryl-undecaprenol N-acetylglucosamine transferase (341 aa).

Residues 10-12 (TGG), Asn-124, Ser-177, and Gln-275 contribute to the UDP-N-acetyl-alpha-D-glucosamine site.

It belongs to the glycosyltransferase 28 family. MurG subfamily.

It is found in the cell inner membrane. The catalysed reaction is di-trans,octa-cis-undecaprenyl diphospho-N-acetyl-alpha-D-muramoyl-L-alanyl-D-glutamyl-meso-2,6-diaminopimeloyl-D-alanyl-D-alanine + UDP-N-acetyl-alpha-D-glucosamine = di-trans,octa-cis-undecaprenyl diphospho-[N-acetyl-alpha-D-glucosaminyl-(1-&gt;4)]-N-acetyl-alpha-D-muramoyl-L-alanyl-D-glutamyl-meso-2,6-diaminopimeloyl-D-alanyl-D-alanine + UDP + H(+). It functions in the pathway cell wall biogenesis; peptidoglycan biosynthesis. Functionally, cell wall formation. Catalyzes the transfer of a GlcNAc subunit on undecaprenyl-pyrophosphoryl-MurNAc-pentapeptide (lipid intermediate I) to form undecaprenyl-pyrophosphoryl-MurNAc-(pentapeptide)GlcNAc (lipid intermediate II). The sequence is that of UDP-N-acetylglucosamine--N-acetylmuramyl-(pentapeptide) pyrophosphoryl-undecaprenol N-acetylglucosamine transferase from Campylobacter hominis (strain ATCC BAA-381 / DSM 21671 / CCUG 45161 / LMG 19568 / NCTC 13146 / CH001A).